A 404-amino-acid polypeptide reads, in one-letter code: Aspergillopepsin-1 (404 aa).

The signal sequence occupies residues 1 to 20; the sequence is MVILSKVAAVAVGLSTVASA. Residues 21–77 constitute a propeptide, activation peptide; that stretch reads LPTGPSHSPHARRGFTINQITRQTARVGPKTASFPAIYSRALAKYGGTVPAHLKSAV. One can recognise a Peptidase A1 domain in the interval 95 to 401; the sequence is YLTPVNIGGT…DSQGPRLGFA (307 aa). Residue D111 is part of the active site. N140 carries N-linked (GlcNAc...) asparagine glycosylation. Residue D293 is part of the active site. An intrachain disulfide couples C329 to C364.

This sequence belongs to the peptidase A1 family. As to quaternary structure, monomer.

The protein localises to the secreted. It carries out the reaction Hydrolysis of proteins with broad specificity. Generally favors hydrophobic residues in P1 and P1', but also accepts Lys in P1, which leads to activation of trypsinogen. Does not clot milk.. Its function is as follows. Secreted aspartic endopeptidase that allows assimilation of proteinaceous substrates. The scissile peptide bond is attacked by a nucleophilic water molecule activated by two aspartic residues in the active site. Shows a broad primary substrate specificity. Favors hydrophobic residues at the P1 and P1' positions, but also accepts a lysine residue in the P1 position, leading to the activation of trypsinogen and chymotrypsinogen A. This chain is Aspergillopepsin-1 (pepA), found in Aspergillus flavus (strain ATCC 200026 / FGSC A1120 / IAM 13836 / NRRL 3357 / JCM 12722 / SRRC 167).